We begin with the raw amino-acid sequence, 172 residues long: MSSLVKEDLEKKLFKPLAQNLCEFIEIEVSVQDRYFLCVSVTKTDEVKITMVKHYRVGLDEKYEVTKRWSLSDLRMIDGKEADTDNPFFDLHFKKVYSLEAYSCASKYSFARTVSRLNHVYLKKDLHMVNFDSTYINDDSIWSSNNKDCLVLMRICFYAFNLVCLSLCPLPL.

The sequence is that of Exocyst complex component 1-like from Mus musculus (Mouse).